Consider the following 115-residue polypeptide: Hydrogenase maturation factor HypA (115 aa).

Ni(2+) is bound at residue histidine 2. Zn(2+) contacts are provided by cysteine 73, cysteine 76, cysteine 89, and cysteine 92.

It belongs to the HypA/HybF family.

Involved in the maturation of [NiFe] hydrogenases. Required for nickel insertion into the metal center of the hydrogenase. In Polaromonas naphthalenivorans (strain CJ2), this protein is Hydrogenase maturation factor HypA.